A 60-amino-acid chain; its full sequence is Large ribosomal subunit protein bL32 (60 aa).

The protein belongs to the bacterial ribosomal protein bL32 family.

The chain is Large ribosomal subunit protein bL32 from Borrelia hermsii (strain HS1 / DAH).